The sequence spans 88 residues: Small ribosomal subunit protein bS20 (88 aa).

The disordered stretch occupies residues 1 to 27 (MANSKTAKKRAIQSEKRRQHNASRRSM).

This sequence belongs to the bacterial ribosomal protein bS20 family.

In terms of biological role, binds directly to 16S ribosomal RNA. In Shewanella amazonensis (strain ATCC BAA-1098 / SB2B), this protein is Small ribosomal subunit protein bS20.